The chain runs to 328 residues: L-serine dehydratase/L-threonine deaminase (328 aa).

Position 41 is an N6-(pyridoxal phosphate)lysine (Lys41). Pro128 serves as a coordination point for pyridoxal 5'-phosphate.

The protein belongs to the serine/threonine dehydratase family. As to quaternary structure, homodimer. Requires pyridoxal 5'-phosphate as cofactor. As to expression, predominantly expressed in the perivenous regions of the liver.

The protein localises to the cytoplasm. It catalyses the reaction L-serine = pyruvate + NH4(+). The enzyme catalyses L-threonine = 2-oxobutanoate + NH4(+). It functions in the pathway carbohydrate biosynthesis; gluconeogenesis. In terms of biological role, catalyzes the pyridoxal-phosphate-dependent dehydrative deamination of L-threonine and L-serine to ammonia and alpha-ketobutyrate and pyruvate, respectively. This is L-serine dehydratase/L-threonine deaminase (SDS) from Homo sapiens (Human).